Reading from the N-terminus, the 275-residue chain is NH(3)-dependent NAD(+) synthetase (275 aa).

An ATP-binding site is contributed by 46–53; sequence GISGGQDS. Asp52 is a Mg(2+) binding site. Residue Arg140 coordinates deamido-NAD(+). Position 160 (Thr160) interacts with ATP. Glu165 contacts Mg(2+). Residues Lys173 and Asp180 each contribute to the deamido-NAD(+) site. Residues Lys189 and Thr211 each contribute to the ATP site. 260-261 lines the deamido-NAD(+) pocket; sequence HK.

It belongs to the NAD synthetase family. Homodimer.

It catalyses the reaction deamido-NAD(+) + NH4(+) + ATP = AMP + diphosphate + NAD(+) + H(+). It functions in the pathway cofactor biosynthesis; NAD(+) biosynthesis; NAD(+) from deamido-NAD(+) (ammonia route): step 1/1. Its function is as follows. Catalyzes the ATP-dependent amidation of deamido-NAD to form NAD. Uses ammonia as a nitrogen source. The polypeptide is NH(3)-dependent NAD(+) synthetase (Escherichia coli O17:K52:H18 (strain UMN026 / ExPEC)).